The following is a 500-amino-acid chain: Cytochrome P450 11B1, mitochondrial (500 aa).

A mitochondrion-targeting transit peptide spans 1–24 (MAFRLKSDVRLAGSWLCLRGARAL). Position 447 (Cys447) interacts with heme.

Belongs to the cytochrome P450 family. It depends on heme as a cofactor.

The protein localises to the mitochondrion inner membrane. It carries out the reaction a steroid + 2 reduced [adrenodoxin] + O2 + 2 H(+) = an 11beta-hydroxysteroid + 2 oxidized [adrenodoxin] + H2O. It catalyses the reaction 11-deoxycortisol + 2 reduced [adrenodoxin] + O2 + 2 H(+) = cortisol + 2 oxidized [adrenodoxin] + H2O. The catalysed reaction is 21-hydroxyprogesterone + 2 reduced [adrenodoxin] + O2 + 2 H(+) = corticosterone + 2 oxidized [adrenodoxin] + H2O. The enzyme catalyses 21-hydroxyprogesterone + 2 reduced [adrenodoxin] + O2 + 2 H(+) = 18-hydroxy-11-deoxycorticosterone + 2 oxidized [adrenodoxin] + H2O. It carries out the reaction 21-hydroxyprogesterone + 2 reduced [adrenodoxin] + O2 + 2 H(+) = 19-hydroxy-11-deoxycorticosterone + 2 oxidized [adrenodoxin] + H2O. It catalyses the reaction cortisol + 2 reduced [adrenodoxin] + O2 + 2 H(+) = 18-hydroxycortisol + 2 oxidized [adrenodoxin] + H2O. The catalysed reaction is 11-deoxycortisol + 2 reduced [adrenodoxin] + O2 + 2 H(+) = 18-hydroxy-11-deoxycortisol + 2 oxidized [adrenodoxin] + H2O. It functions in the pathway steroid biosynthesis; glucocorticoid biosynthesis. The protein operates within steroid hormone biosynthesis. Its function is as follows. A cytochrome P450 monooxygenase involved in the biosynthesis of adrenal corticoids. Catalyzes a variety of reactions that are essential for many species, including detoxification, defense, and the formation of endogenous chemicals like steroid hormones. Steroid 11beta, 18- and 19-hydroxylase with preferred regioselectivity at 11beta, then 18, and lastly 19. Catalyzes the hydroxylation of 11-deoxycortisol and 11-deoxycorticosterone (21-hydroxyprogesterone) at 11beta position, yielding cortisol or corticosterone, respectively, but cannot produce aldosterone. Mechanistically, uses molecular oxygen inserting one oxygen atom into a substrate for hydroxylation and reducing the second into a water molecule. Two electrons are provided by NADPH via a two-protein mitochondrial transfer system comprising flavoprotein FDXR (adrenodoxin/ferredoxin reductase) and nonheme iron-sulfur protein FDX1 or FDX2 (adrenodoxin/ferredoxin). Due to its lack of 18-oxidation activity, it is incapable of generating aldosterone. Could also be involved in the androgen metabolic pathway. This chain is Cytochrome P450 11B1, mitochondrial (CYP11B1), found in Cavia porcellus (Guinea pig).